Here is a 78-residue protein sequence, read N- to C-terminus: Putative membrane protein insertion efficiency factor (78 aa).

The protein belongs to the UPF0161 family.

The protein localises to the cell inner membrane. Could be involved in insertion of integral membrane proteins into the membrane. This is Putative membrane protein insertion efficiency factor from Roseobacter denitrificans (strain ATCC 33942 / OCh 114) (Erythrobacter sp. (strain OCh 114)).